We begin with the raw amino-acid sequence, 230 residues long: Urease accessory protein UreF (230 aa).

The protein belongs to the UreF family. In terms of assembly, ureD, UreF and UreG form a complex that acts as a GTP-hydrolysis-dependent molecular chaperone, activating the urease apoprotein by helping to assemble the nickel containing metallocenter of UreC. The UreE protein probably delivers the nickel.

Its subcellular location is the cytoplasm. Functionally, required for maturation of urease via the functional incorporation of the urease nickel metallocenter. This chain is Urease accessory protein UreF, found in Allorhizobium ampelinum (strain ATCC BAA-846 / DSM 112012 / S4) (Agrobacterium vitis (strain S4)).